We begin with the raw amino-acid sequence, 122 residues long: Large ribosomal subunit protein uL14 (122 aa).

The protein belongs to the universal ribosomal protein uL14 family. As to quaternary structure, part of the 50S ribosomal subunit. Forms a cluster with proteins L3 and L19. In the 70S ribosome, L14 and L19 interact and together make contacts with the 16S rRNA in bridges B5 and B8.

In terms of biological role, binds to 23S rRNA. Forms part of two intersubunit bridges in the 70S ribosome. This chain is Large ribosomal subunit protein uL14, found in Baumannia cicadellinicola subsp. Homalodisca coagulata.